The sequence spans 287 residues: Formamidopyrimidine-DNA glycosylase (287 aa).

The active-site Schiff-base intermediate with DNA is Pro-2. The active-site Proton donor is Glu-3. The Proton donor; for beta-elimination activity role is filled by Lys-60. The DNA site is built by His-100 and Arg-119. An FPG-type zinc finger spans residues 249 to 283; sequence QVYGREGEPCRHCGTVIAKIKLGGRSAHFCPQCQP. Residue Arg-273 is the Proton donor; for delta-elimination activity of the active site.

The protein belongs to the FPG family. Monomer. Requires Zn(2+) as cofactor.

It catalyses the reaction Hydrolysis of DNA containing ring-opened 7-methylguanine residues, releasing 2,6-diamino-4-hydroxy-5-(N-methyl)formamidopyrimidine.. The enzyme catalyses 2'-deoxyribonucleotide-(2'-deoxyribose 5'-phosphate)-2'-deoxyribonucleotide-DNA = a 3'-end 2'-deoxyribonucleotide-(2,3-dehydro-2,3-deoxyribose 5'-phosphate)-DNA + a 5'-end 5'-phospho-2'-deoxyribonucleoside-DNA + H(+). Functionally, involved in base excision repair of DNA damaged by oxidation or by mutagenic agents. Acts as a DNA glycosylase that recognizes and removes damaged bases. Has a preference for oxidized purines, such as 7,8-dihydro-8-oxoguanine (8-oxoG). Has AP (apurinic/apyrimidinic) lyase activity and introduces nicks in the DNA strand. Cleaves the DNA backbone by beta-delta elimination to generate a single-strand break at the site of the removed base with both 3'- and 5'-phosphates. The polypeptide is Formamidopyrimidine-DNA glycosylase (mutM) (Synechocystis sp. (strain ATCC 27184 / PCC 6803 / Kazusa)).